The following is a 51-amino-acid chain: Nawaprin (51 aa).

Residues 1–50 form the WAP domain; sequence NEKSGSCPDMSMPIPPLGICKTLCNSDSGCPNVQKCCKNGCGFMTCTTPV. 4 disulfide bridges follow: C7–C37, C20–C41, C24–C36, and C30–C46.

In terms of tissue distribution, expressed by the venom gland.

The protein resides in the secreted. Damages membranes of susceptible bacteria. Has no hemolytic activity. Not toxic to mice. Does not inhibit the proteinases elastase and cathepsin G. The protein is Nawaprin of Naja nigricollis (Black-necked spitting cobra).